A 181-amino-acid chain; its full sequence is MSEENIGENEVETPETEPSAEAEVESPFAKLEGELEKLRNEVLYAQAETQNVRRRLEKEKADASAYAATGFARDMLSVADNLGRALAAIPAELREDDRIGSLLTGIEMTAKELENVFQRNGISKIEALGAKLDPNRHQAMVELPSADAEPGTVIQEMQAGYMIKDRLLRPALVGVAKTPEA.

The span at methionine 1 to valine 24 shows a compositional bias: acidic residues. The disordered stretch occupies residues methionine 1 to serine 26.

This sequence belongs to the GrpE family. In terms of assembly, homodimer.

It is found in the cytoplasm. In terms of biological role, participates actively in the response to hyperosmotic and heat shock by preventing the aggregation of stress-denatured proteins, in association with DnaK and GrpE. It is the nucleotide exchange factor for DnaK and may function as a thermosensor. Unfolded proteins bind initially to DnaJ; upon interaction with the DnaJ-bound protein, DnaK hydrolyzes its bound ATP, resulting in the formation of a stable complex. GrpE releases ADP from DnaK; ATP binding to DnaK triggers the release of the substrate protein, thus completing the reaction cycle. Several rounds of ATP-dependent interactions between DnaJ, DnaK and GrpE are required for fully efficient folding. The protein is Protein GrpE of Rhizorhabdus wittichii (strain DSM 6014 / CCUG 31198 / JCM 15750 / NBRC 105917 / EY 4224 / RW1) (Sphingomonas wittichii).